The primary structure comprises 407 residues: METTTVKEISILKNGHVTSPSGFYAGGVHCGLRRKKLDLGWIYSDTPASAAGVYTQNTFQAAPLLITKHTIEHSKQIQSIIVNSANANSFTGKQGYEDALLMQKLVANQLNIEQHHVAVASTGVIGERLPMDKVRNGIRQLSHTQVDAESFEKAILTTDTSTKHVAVQVEIDGKLVTIGGAAKGSGMIHPNMATMLSFITTDANVNQDSLQQALRKVTDQSYNQITVDGDSSTNDMVLVLANGRAENNELNESHPEWSVFMDAWNIVAIELAKMIARDGEGATKLIEVIVKGASTNQQASQIAKAVISSNLVKTAIYGNDANWGRIIGAIGYSGVPVEASKLSIAIGGIQVVNNGEPIDFDEKDCKQALNQETVNIVIDLQSGMDTATAWGCDLTYDYIRINASYRT.

The substrate site is built by Thr-157, Lys-183, Thr-194, Glu-280, Asn-402, and Thr-407. Thr-194 acts as the Nucleophile in catalysis.

This sequence belongs to the ArgJ family. Heterotetramer of two alpha and two beta chains.

The protein localises to the cytoplasm. It carries out the reaction N(2)-acetyl-L-ornithine + L-glutamate = N-acetyl-L-glutamate + L-ornithine. The catalysed reaction is L-glutamate + acetyl-CoA = N-acetyl-L-glutamate + CoA + H(+). It functions in the pathway amino-acid biosynthesis; L-arginine biosynthesis; L-ornithine and N-acetyl-L-glutamate from L-glutamate and N(2)-acetyl-L-ornithine (cyclic): step 1/1. Its pathway is amino-acid biosynthesis; L-arginine biosynthesis; N(2)-acetyl-L-ornithine from L-glutamate: step 1/4. Functionally, catalyzes two activities which are involved in the cyclic version of arginine biosynthesis: the synthesis of N-acetylglutamate from glutamate and acetyl-CoA as the acetyl donor, and of ornithine by transacetylation between N(2)-acetylornithine and glutamate. The chain is Arginine biosynthesis bifunctional protein ArgJ from Oceanobacillus iheyensis (strain DSM 14371 / CIP 107618 / JCM 11309 / KCTC 3954 / HTE831).